The following is a 1522-amino-acid chain: Lysophospholipase NTE1 (1522 aa).

The Lumenal portion of the chain corresponds to Met1–Thr73. The chain crosses the membrane as a helical span at residues Val74–Leu94. The Cytoplasmic portion of the chain corresponds to Arg95–Ile1522. Disordered regions lie at residues Ser443–Lys468, Asp485–Pro523, and Ser535–Val556. Low complexity-rich tracts occupy residues Lys498 to Ser511 and Pro540 to Val555. Residues Pro661–Leu782 and Thr778–Lys918 contribute to the a nucleoside 3',5'-cyclic phosphate site. Disordered regions lie at residues Gln828 to Pro852 and Ser1125 to Pro1145. Positions Leu1219 to Lys1383 constitute a PNPLA domain. A GXGXXG motif is present at residues Gly1223–Gly1228. Positions Gly1250 to Gly1254 match the GXSXG motif. The active-site Nucleophile is Ser1252. The active-site Proton acceptor is Asp1370. Residues Asp1370–Gly1372 carry the DGA/G motif.

The protein belongs to the NTE family.

It localises to the endoplasmic reticulum membrane. The enzyme catalyses a 1-acyl-sn-glycero-3-phosphocholine + H2O = sn-glycerol 3-phosphocholine + a fatty acid + H(+). Its activity is regulated as follows. Inhibited by organophosphorus esters. Functionally, intracellular phospholipase B that catalyzes the double deacylation of phosphatidylcholine (PC) to glycerophosphocholine (GroPCho). Plays an important role in membrane lipid homeostasis. Responsible for the rapid PC turnover in response to inositol, elevated temperatures, or when choline is present in the growth medium. The sequence is that of Lysophospholipase NTE1 (NTE1) from Eremothecium gossypii (strain ATCC 10895 / CBS 109.51 / FGSC 9923 / NRRL Y-1056) (Yeast).